Reading from the N-terminus, the 245-residue chain is Probable phosphatase YE2421 (245 aa).

Zn(2+)-binding residues include histidine 7, histidine 9, histidine 15, histidine 40, glutamate 73, histidine 101, histidine 131, aspartate 192, and histidine 194.

Belongs to the PHP family. Homotrimer. Zn(2+) is required as a cofactor.

This Yersinia enterocolitica serotype O:8 / biotype 1B (strain NCTC 13174 / 8081) protein is Probable phosphatase YE2421.